We begin with the raw amino-acid sequence, 94 residues long: Small ribosomal subunit protein bS18 (94 aa).

Residues 1-12 are compositionally biased toward low complexity; that stretch reads MSEQNSRPQNSE. Residues 1–29 form a disordered region; the sequence is MSEQNSRPQNSERPQRSRRPQGGPRRRRK. Basic residues predominate over residues 16 to 29; that stretch reads RSRRPQGGPRRRRK.

It belongs to the bacterial ribosomal protein bS18 family. As to quaternary structure, part of the 30S ribosomal subunit. Forms a tight heterodimer with protein bS6.

Binds as a heterodimer with protein bS6 to the central domain of the 16S rRNA, where it helps stabilize the platform of the 30S subunit. This chain is Small ribosomal subunit protein bS18, found in Leuconostoc citreum (strain KM20).